Here is a 130-residue protein sequence, read N- to C-terminus: MAENQYYGTGRRKSSSARVFVKAGSGNIVINQRSLDQYFGRETARMVVRQPLELVDMVGKLDLYITVKGGGISGQAGAIRHGITRALMEYDETLRADLRKAGFVTRDARQVERKKVGLRKARRRPQFSKR.

It belongs to the universal ribosomal protein uS9 family.

The protein is Small ribosomal subunit protein uS9 of Sodalis glossinidius (strain morsitans).